The sequence spans 83 residues: Three-finger toxin W-IV (83 aa).

Positions 1-21 are cleaved as a signal peptide; the sequence is MKTLLLTLVVVTIVCLDLGHT. Disulfide bonds link Cys24-Cys45, Cys38-Cys62, Cys64-Cys75, and Cys76-Cys81.

This sequence belongs to the three-finger toxin family. Short-chain subfamily. Type I alpha-neurotoxin sub-subfamily. Expressed by the venom gland.

Its subcellular location is the secreted. In terms of biological role, binds to muscle nicotinic acetylcholine receptor (nAChR) and inhibit acetylcholine from binding to the receptor, thereby impairing neuromuscular transmission. In Walterinnesia aegyptia (Desert black snake), this protein is Three-finger toxin W-IV.